The sequence spans 247 residues: 3(1)-hydroxy-L-isoleucine 4-dioxygenase (247 aa).

Fe cation-binding residues include His160, Asp162, and His213.

Belongs to the iron/ascorbate-dependent oxidoreductase family. It depends on L-ascorbate as a cofactor. Fe(2+) is required as a cofactor.

It catalyses the reaction 3(1)-hydroxy-L-isoleucine + 2-oxoglutarate + O2 = (4S)-3(1),4-dihydroxy-L-isoleucine + succinate + CO2. In terms of biological role, catalyzes the hydroxylation of L-4'-hydroxyisoleucine (4'-HIL) at the C-4 position to form L-4,4'-dihydroxyisoleucine (4,4'-DIHIL). Together with HilA, catalyzes the two step conversion of L-isoleucine into L-4,4'-dihydroxyisoleucine. In vitro, in the absence of HilA, can also catalyze the oxidation of L-methionine and the C-4-hydroxylation of L-leucine and L-isoleucine. This Pantoea ananatis (strain AJ13355) protein is 3(1)-hydroxy-L-isoleucine 4-dioxygenase.